The chain runs to 378 residues: Peptide chain release factor RF2 (378 aa).

Glutamine 253 bears the N5-methylglutamine mark.

It belongs to the prokaryotic/mitochondrial release factor family. In terms of assembly, interacts with the ribosome. Interacts with ribosomal protein L11. Recruited to stalled E.coli ribosomes by E.coli ArfA.

It localises to the cytoplasm. Peptide chain release factor 2 directs the termination of translation in response to the peptide chain termination codons UGA and UAA. In endogenous ribosomes interacts with P-site tRNA and 23S rRNA. In the presence of truncated mRNA in the 70S ribosome, ArfA and RF2 interact such that the GGQ peptide hydrolysis motif of RF2 rises into the peptidyl-transferase center and releases the ribosome. Recruited to stalled E.coli 70S ribosomes by E.coli ArfA, but cannot be functionally accomodated in the peptidyl-transferase center. Note T.thermophilus probably does not encode arfA. This Thermus thermophilus (strain ATCC 27634 / DSM 579 / HB8) protein is Peptide chain release factor RF2 (prfB).